Here is a 381-residue protein sequence, read N- to C-terminus: N-acetylglucosamine-6-phosphate deacetylase (381 aa).

Residue E129 participates in a divalent metal cation binding. 140–141 contributes to the substrate binding site; the sequence is VH. H193 and H214 together coordinate a divalent metal cation. Substrate is bound by residues 217-218, R226, and 246-249; these read NA and DGVH. Catalysis depends on D271, which acts as the Proton donor/acceptor. 306-308 contacts substrate; it reads IAG.

Belongs to the metallo-dependent hydrolases superfamily. NagA family. In terms of assembly, homotetramer. A divalent metal cation is required as a cofactor.

It carries out the reaction N-acetyl-D-glucosamine 6-phosphate + H2O = D-glucosamine 6-phosphate + acetate. It participates in amino-sugar metabolism; N-acetylneuraminate degradation; D-fructose 6-phosphate from N-acetylneuraminate: step 4/5. In terms of biological role, involved in the first committed step in the biosynthesis of amino-sugar-nucleotides. Catalyzes the hydrolysis of the N-acetyl group of N-acetylglucosamine-6-phosphate (GlcNAc-6-P) to yield glucosamine 6-phosphate and acetate. The polypeptide is N-acetylglucosamine-6-phosphate deacetylase (nagA) (Haemophilus influenzae (strain ATCC 51907 / DSM 11121 / KW20 / Rd)).